Here is a 358-residue protein sequence, read N- to C-terminus: Phosphoserine aminotransferase (358 aa).

Arg-41 serves as a coordination point for L-glutamate. Residues 75–76 (AS), Trp-100, Thr-148, Asp-167, and Gln-190 contribute to the pyridoxal 5'-phosphate site. Lys-191 carries the post-translational modification N6-(pyridoxal phosphate)lysine. 233–234 (NT) is a pyridoxal 5'-phosphate binding site.

It belongs to the class-V pyridoxal-phosphate-dependent aminotransferase family. SerC subfamily. Homodimer. Pyridoxal 5'-phosphate serves as cofactor.

It localises to the cytoplasm. The catalysed reaction is O-phospho-L-serine + 2-oxoglutarate = 3-phosphooxypyruvate + L-glutamate. It carries out the reaction 4-(phosphooxy)-L-threonine + 2-oxoglutarate = (R)-3-hydroxy-2-oxo-4-phosphooxybutanoate + L-glutamate. Its pathway is amino-acid biosynthesis; L-serine biosynthesis; L-serine from 3-phospho-D-glycerate: step 2/3. It functions in the pathway cofactor biosynthesis; pyridoxine 5'-phosphate biosynthesis; pyridoxine 5'-phosphate from D-erythrose 4-phosphate: step 3/5. In terms of biological role, catalyzes the reversible conversion of 3-phosphohydroxypyruvate to phosphoserine and of 3-hydroxy-2-oxo-4-phosphonooxybutanoate to phosphohydroxythreonine. This Campylobacter jejuni subsp. jejuni serotype O:2 (strain ATCC 700819 / NCTC 11168) protein is Phosphoserine aminotransferase.